The following is a 212-amino-acid chain: Ribosomal RNA small subunit methyltransferase G (212 aa).

Residues Gly-76, Met-81, Val-127–Glu-128, and Arg-145 each bind S-adenosyl-L-methionine.

Belongs to the methyltransferase superfamily. RNA methyltransferase RsmG family.

The protein resides in the cytoplasm. The catalysed reaction is guanosine(527) in 16S rRNA + S-adenosyl-L-methionine = N(7)-methylguanosine(527) in 16S rRNA + S-adenosyl-L-homocysteine. Functionally, specifically methylates the N7 position of guanine in position 527 of 16S rRNA. In Acinetobacter baylyi (strain ATCC 33305 / BD413 / ADP1), this protein is Ribosomal RNA small subunit methyltransferase G.